A 215-amino-acid chain; its full sequence is Chloramphenicol acetyltransferase (215 aa).

Histidine 189 serves as the catalytic Proton acceptor.

This sequence belongs to the chloramphenicol acetyltransferase family. In terms of assembly, homotrimer.

The catalysed reaction is chloramphenicol + acetyl-CoA = chloramphenicol 3-acetate + CoA. This enzyme is an effector of chloramphenicol resistance in bacteria. This chain is Chloramphenicol acetyltransferase (cat), found in Staphylococcus aureus.